Here is a 247-residue protein sequence, read N- to C-terminus: Exosome complex component Rrp4 (247 aa).

Positions 75–148 (DDLVIGIVEN…RDPVITVKGK (74 aa)) constitute an S1 motif domain. A KH domain is found at 154–220 (TEGVVVDVKP…QAIKLIELKA (67 aa)).

The protein belongs to the RRP4 family. As to quaternary structure, component of the archaeal exosome complex. Forms a trimer of Rrp4 and/or Csl4 subunits. The trimer associates with a hexameric ring-like arrangement composed of 3 Rrp41-Rrp42 heterodimers.

The protein localises to the cytoplasm. In terms of biological role, non-catalytic component of the exosome, which is a complex involved in RNA degradation. Increases the RNA binding and the efficiency of RNA degradation. Confers strong poly(A) specificity to the exosome. The polypeptide is Exosome complex component Rrp4 (Thermosphaera aggregans (strain DSM 11486 / M11TL)).